Consider the following 518-residue polypeptide: MQKLPKWKIFLSIICTVFAVICALPNFMQVNSKFLPHDSVNLGLDLRGGAHLLLDVDFDTYLNDSMENLADTLRKNFREDKIGYKNLLVRQNSIQLEVRSPEKLKPLKKIINKIDPEIIAEVNENKIKLSYSESRLNDLLNKVVDQSIEIVRMRVDSTGTKEPTLQKQGDKHILLQVPGEENPSYLKNILGKTAKLTFHLVDENANIEEAVKGHVPVGSMLVKGDNASHGEYYVVIKKKVVLGGDQLTTASASFDQNSQAVVAFSFNNLGSKIFGEITKNNIGKRLAIVLDNKLLSAPTINGAIMGGSGIITGNFTVESANELALLLRAGSLPAPLKIIEERSIGPNLGADSIESGKKAGLIGFIAVCIFMVWSYGVLGLFANIALSLALLYILALLSLFQATLTLPGIAGIILTMGMAVDANVLIYERIKEELHKGVSTLYAIRTGFESAFATILDANLTTLIVAFLLYIFGVGAIKGFAVALTIGIISSMFSAIIITKLLIDIWVQYFKPKKLGLV.

6 helical membrane-spanning segments follow: residues 9–29 (IFLS…NFMQ), 361–381 (LIGF…LGLF), 384–404 (IALS…QATL), 406–426 (LPGI…NVLI), 452–474 (FATI…IFGV), and 486–506 (IGII…IDIW).

This sequence belongs to the SecD/SecF family. SecD subfamily. Forms a complex with SecF. Part of the essential Sec protein translocation apparatus which comprises SecA, SecYEG and auxiliary proteins SecDF-YajC and YidC.

The protein localises to the cell inner membrane. Part of the Sec protein translocase complex. Interacts with the SecYEG preprotein conducting channel. SecDF uses the proton motive force (PMF) to complete protein translocation after the ATP-dependent function of SecA. This is Protein translocase subunit SecD from Rickettsia conorii (strain ATCC VR-613 / Malish 7).